The primary structure comprises 428 residues: 5'-deoxyadenosine deaminase (428 aa).

Zn(2+) contacts are provided by His-59 and His-61. 2 residues coordinate substrate: Glu-88 and His-180. Residue His-207 participates in Zn(2+) binding. Positions 210 and 296 each coordinate substrate. Asp-296 serves as a coordination point for Zn(2+).

Belongs to the metallo-dependent hydrolases superfamily. MTA/SAH deaminase family. Homotetramer. The cofactor is Zn(2+).

The catalysed reaction is 5'-deoxyadenosine + H2O + H(+) = 5'-deoxyinosine + NH4(+). The enzyme catalyses S-adenosyl-L-homocysteine + H2O + H(+) = S-inosyl-L-homocysteine + NH4(+). It carries out the reaction S-methyl-5'-thioadenosine + H2O + H(+) = S-methyl-5'-thioinosine + NH4(+). It catalyses the reaction adenosine + H2O + H(+) = inosine + NH4(+). The protein operates within amino-acid biosynthesis; S-adenosyl-L-methionine biosynthesis. In terms of biological role, catalyzes the deamination of three SAM-derived enzymatic products, namely 5'-deoxyadenosine, S-adenosyl-L-homocysteine, and 5'-methylthioadenosine, to produce the inosine analogs. Can also deaminate adenosine. The preferred substrate for this enzyme is 5'-deoxyadenosine, but all these substrates are efficiently deaminated. Likely functions in a S-adenosyl-L-methionine (SAM) recycling pathway from S-adenosyl-L-homocysteine (SAH) produced from SAM-dependent methylation reactions. May also be involved in the recycling of 5'-deoxyadenosine, whereupon the 5'-deoxyribose moiety of 5'-deoxyinosine is further metabolized to deoxyhexoses used for the biosynthesis of aromatic amino acids in methanogens. This chain is 5'-deoxyadenosine deaminase, found in Methanococcus aeolicus (strain ATCC BAA-1280 / DSM 17508 / OCM 812 / Nankai-3).